A 219-amino-acid polypeptide reads, in one-letter code: ATP-dependent dethiobiotin synthetase BioD (219 aa).

Residue 12-17 participates in ATP binding; it reads EVGKTY. Position 16 (Thr16) interacts with Mg(2+). Residue Lys37 is part of the active site. Ser41 contacts substrate. ATP is bound by residues Asp52, 114 to 117, and 174 to 175; these read EGAG and NC. Mg(2+) is bound by residues Asp52 and Glu114.

Belongs to the dethiobiotin synthetase family. Homodimer. Requires Mg(2+) as cofactor.

The protein resides in the cytoplasm. The enzyme catalyses (7R,8S)-7,8-diammoniononanoate + CO2 + ATP = (4R,5S)-dethiobiotin + ADP + phosphate + 3 H(+). The protein operates within cofactor biosynthesis; biotin biosynthesis; biotin from 7,8-diaminononanoate: step 1/2. Its function is as follows. Catalyzes a mechanistically unusual reaction, the ATP-dependent insertion of CO2 between the N7 and N8 nitrogen atoms of 7,8-diaminopelargonic acid (DAPA, also called 7,8-diammoniononanoate) to form a ureido ring. The sequence is that of ATP-dependent dethiobiotin synthetase BioD from Francisella tularensis subsp. holarctica (strain FTNF002-00 / FTA).